Consider the following 371-residue polypeptide: Aminomethyltransferase (371 aa).

This sequence belongs to the GcvT family. As to quaternary structure, the glycine cleavage system is composed of four proteins: P, T, L and H.

The enzyme catalyses N(6)-[(R)-S(8)-aminomethyldihydrolipoyl]-L-lysyl-[protein] + (6S)-5,6,7,8-tetrahydrofolate = N(6)-[(R)-dihydrolipoyl]-L-lysyl-[protein] + (6R)-5,10-methylene-5,6,7,8-tetrahydrofolate + NH4(+). Functionally, the glycine cleavage system catalyzes the degradation of glycine. The polypeptide is Aminomethyltransferase (Cellvibrio japonicus (strain Ueda107) (Pseudomonas fluorescens subsp. cellulosa)).